We begin with the raw amino-acid sequence, 396 residues long: Phosphoglycerate kinase (396 aa).

Substrate-binding positions include 21–23 (DFN), R36, 59–62 (HLGR), R118, and R151. ATP is bound by residues K201, G292, E323, and 349 to 352 (GGDS).

The protein belongs to the phosphoglycerate kinase family. As to quaternary structure, monomer.

Its subcellular location is the cytoplasm. The enzyme catalyses (2R)-3-phosphoglycerate + ATP = (2R)-3-phospho-glyceroyl phosphate + ADP. The protein operates within carbohydrate degradation; glycolysis; pyruvate from D-glyceraldehyde 3-phosphate: step 2/5. This chain is Phosphoglycerate kinase, found in Leptospira interrogans serogroup Icterohaemorrhagiae serovar copenhageni (strain Fiocruz L1-130).